We begin with the raw amino-acid sequence, 98 residues long: NADH-ubiquinone oxidoreductase chain 4L (98 aa).

A run of 3 helical transmembrane segments spans residues 1–21 (MPII…GMLI), 29–49 (SLLC…LMAL), and 58–78 (IVPI…LALL).

Belongs to the complex I subunit 4L family. In terms of assembly, core subunit of respiratory chain NADH dehydrogenase (Complex I) which is composed of 45 different subunits.

The protein localises to the mitochondrion inner membrane. The catalysed reaction is a ubiquinone + NADH + 5 H(+)(in) = a ubiquinol + NAD(+) + 4 H(+)(out). Functionally, core subunit of the mitochondrial membrane respiratory chain NADH dehydrogenase (Complex I) which catalyzes electron transfer from NADH through the respiratory chain, using ubiquinone as an electron acceptor. Part of the enzyme membrane arm which is embedded in the lipid bilayer and involved in proton translocation. In Nasalis larvatus (Proboscis monkey), this protein is NADH-ubiquinone oxidoreductase chain 4L (MT-ND4L).